The following is a 178-amino-acid chain: Ribosome maturation factor RimM (178 aa).

Residues alanine 100–phenylalanine 178 enclose the PRC barrel domain.

This sequence belongs to the RimM family. In terms of assembly, binds ribosomal protein uS19.

Its subcellular location is the cytoplasm. In terms of biological role, an accessory protein needed during the final step in the assembly of 30S ribosomal subunit, possibly for assembly of the head region. Essential for efficient processing of 16S rRNA. May be needed both before and after RbfA during the maturation of 16S rRNA. It has affinity for free ribosomal 30S subunits but not for 70S ribosomes. The sequence is that of Ribosome maturation factor RimM from Pseudomonas putida (strain W619).